The primary structure comprises 34 residues: Mu-theraphotoxin-CCy1a (34 aa).

3 disulfides stabilise this stretch: Cys3–Cys18, Cys10–Cys23, and Cys17–Cys30.

The protein belongs to the neurotoxin 10 (Hwtx-1) family. 14 (Hntx-1) subfamily. Expressed by the venom gland.

It localises to the secreted. Functionally, voltage-gated sodium channel Nav1.7/SCN9A inhibitor. The sequence is that of Mu-theraphotoxin-CCy1a from Chromatopelma cyaneopubescens (Greenbottle blue tarantula).